The following is a 130-amino-acid chain: Large ribosomal subunit protein bL20 (130 aa).

Belongs to the bacterial ribosomal protein bL20 family.

Binds directly to 23S ribosomal RNA and is necessary for the in vitro assembly process of the 50S ribosomal subunit. It is not involved in the protein synthesizing functions of that subunit. The chain is Large ribosomal subunit protein bL20 from Clavibacter sepedonicus (Clavibacter michiganensis subsp. sepedonicus).